The primary structure comprises 264 residues: Cytosolic Fe-S cluster assembly factor Nubp2 homolog (264 aa).

An ATP-binding site is contributed by 14-21 (GKGGVGKS). Residues Cys-188 and Cys-191 each contribute to the [4Fe-4S] cluster site.

The protein belongs to the Mrp/NBP35 ATP-binding proteins family. NUBP2/CFD1 subfamily. As to quaternary structure, heterotetramer of 2 Nubp1 and 2 Nubp2 chains. The cofactor is [4Fe-4S] cluster.

The protein resides in the cytoplasm. Component of the cytosolic iron-sulfur (Fe/S) protein assembly (CIA) machinery. Required for maturation of extramitochondrial Fe-S proteins. The Nubp1-Nubp2 heterotetramer forms a Fe-S scaffold complex, mediating the de novo assembly of an Fe-S cluster and its transfer to target apoproteins. This chain is Cytosolic Fe-S cluster assembly factor Nubp2 homolog, found in Drosophila grimshawi (Hawaiian fruit fly).